The chain runs to 623 residues: Keratin, type I cytoskeletal 9 (623 aa).

Positions 1–13 are enriched in low complexity; the sequence is MSCRQFSSSYLSR. Positions 1 to 25 are disordered; it reads MSCRQFSSSYLSRSGGGGGGGLGSG. A head region spans residues 1–152; that stretch reads MSCRQFSSSY…GGDGGILTAN (152 aa). S14 and S57 each carry phosphoserine. Residues 14-25 are compositionally biased toward gly residues; that stretch reads SGGGGGGGLGSG. Positions 153–188 are coil 1A; the sequence is EKSTMQELNSRLASYLDKVQALEEANNDLENKIQDW. The region spanning 153–465 is the IF rod domain; it reads EKSTMQELNS…NLLEGGQEDF (313 aa). The tract at residues 189-207 is linker 1; the sequence is YDKKGPAAIQKNYSPYYNT. A coil 1B region spans residues 208 to 299; that stretch reads IDDLKDQIVD…KNHKEEMSQL (92 aa). The interval 300-322 is linker 12; sequence TGQNSGDVNVEINVAPGKDLTKT. A coil 2 region spans residues 323–461; that stretch reads LNDMRQEYEQ…ETYHNLLEGG (139 aa). 2 disordered regions span residues 462–496 and 534–623; these read QEDF…SGGS and YGGG…SSHS. A tail region spans residues 462 to 623; it reads QEDFESSGAG…GGGSGKSSHS (162 aa). Gly residues predominate over residues 471–496; sequence GKIGLGGRGGSGGSYGRGSRGGSGGS.

This sequence belongs to the intermediate filament family. In terms of assembly, heterotetramer of two type I and two type II keratins. Expressed in the terminally differentiated epidermis of palms and soles.

In terms of biological role, may serve an important special function either in the mature palmar and plantar skin tissue or in the morphogenetic program of the formation of these tissues. Plays a role in keratin filament assembly. This chain is Keratin, type I cytoskeletal 9 (KRT9), found in Homo sapiens (Human).